The chain runs to 199 residues: LexA repressor (199 aa).

Residues 28-47 (IRDIAKHFKLTPRGAHIHVI) constitute a DNA-binding region (H-T-H motif). Residues Ser120 and Lys157 each act as for autocatalytic cleavage activity in the active site.

This sequence belongs to the peptidase S24 family. As to quaternary structure, homodimer.

It carries out the reaction Hydrolysis of Ala-|-Gly bond in repressor LexA.. Represses a number of genes involved in the response to DNA damage (SOS response), including recA and lexA. In the presence of single-stranded DNA, RecA interacts with LexA causing an autocatalytic cleavage which disrupts the DNA-binding part of LexA, leading to derepression of the SOS regulon and eventually DNA repair. The chain is LexA repressor from Thermosipho melanesiensis (strain DSM 12029 / CIP 104789 / BI429).